Here is a 116-residue protein sequence, read N- to C-terminus: Iron-sulfur cluster insertion protein ErpA (116 aa).

Iron-sulfur cluster is bound by residues C44, C108, and C110.

This sequence belongs to the HesB/IscA family. In terms of assembly, homodimer. Iron-sulfur cluster serves as cofactor.

Functionally, required for insertion of 4Fe-4S clusters for at least IspG. This Pseudomonas entomophila (strain L48) protein is Iron-sulfur cluster insertion protein ErpA.